A 639-amino-acid chain; its full sequence is MALANTGSEAEPVEQSSHPEIEQHSTKVLMLGALGVVYGDIGTSPIYAFREALVASSHGTVAQRGDILGVLSLIIWSLTIIVTIKYIMFVLRADNRGEGGVLSLMALARGSFPKRSAVILGIGIVGASLFFGDAVITPAISVLSAVEGMNVVTPTFQPYVVPLTLVILAVVFAVQRFGTGGVGLVFGPVTAVWFLAIGLSGLKHIIADPEILWAISPHYIVAFLIHSPDVAFVTIGAIFLAVTGAEALYADLGHFGRKPIVLAWLSIVFPCLLLNYAGQGAFVLAKNGVVGHPFFEMNEGWALIPMVVLATAATVIASQAVISGAFSLTRQAVQLNMLPRLEILHTSEKQSGQIYMPRVNLLLALVVMMLVVGFGESSKLASAYGISVTGNMLVTTVLLYVVMTRIWKWRLWVAISLTVLFAFIDIGFFASNIVKVFEGGWASLLVAFTIVLGMWTWVRGSRYLFDKTRRNEIPLDFLAGNLLKKKPQLVSGTAVFLTSDPLSAPTALMHSLKHYKVLHEQNVILSVVTAPQPVVPDSDRVKMETVNELFMRVTLTFGYMEQPNIPRALAICRKQGWKFDIMTTSFFLSRRSLKASPNSGMPVWQDRLFIGLARTAADATEYFQIPTGRVVEIGTQVAI.

Over residues 1–16 (MALANTGSEAEPVEQS) the composition is skewed to polar residues. The segment at 1-21 (MALANTGSEAEPVEQSSHPEI) is disordered. Transmembrane regions (helical) follow at residues 29 to 49 (LMLGALGVVYGDIGTSPIYAF), 67 to 87 (ILGVLSLIIWSLTIIVTIKYI), 117 to 137 (AVILGIGIVGASLFFGDAVIT), 154 to 174 (PTFQPYVVPLTLVILAVVFAV), 182 to 202 (VGLVFGPVTAVWFLAIGLSGL), 220 to 240 (IVAFLIHSPDVAFVTIGAIFL), 260 to 280 (IVLAWLSIVFPCLLLNYAGQG), 302 to 322 (ALIPMVVLATAATVIASQAVI), 354 to 374 (IYMPRVNLLLALVVMMLVVGF), 383 to 403 (AYGISVTGNMLVTTVLLYVVM), 411 to 431 (LWVAISLTVLFAFIDIGFFAS), and 436 to 456 (VFEGGWASLLVAFTIVLGMWT).

This sequence belongs to the HAK/KUP transporter (TC 2.A.72) family.

The protein localises to the cell inner membrane. The catalysed reaction is K(+)(in) + H(+)(in) = K(+)(out) + H(+)(out). Its function is as follows. Transport of potassium into the cell. Likely operates as a K(+):H(+) symporter. This chain is Probable potassium transport system protein Kup 1, found in Mesorhizobium japonicum (strain LMG 29417 / CECT 9101 / MAFF 303099) (Mesorhizobium loti (strain MAFF 303099)).